A 396-amino-acid chain; its full sequence is NADH-quinone oxidoreductase subunit D (396 aa).

The protein belongs to the complex I 49 kDa subunit family. As to quaternary structure, NDH-1 is composed of 14 different subunits. Subunits NuoB, C, D, E, F, and G constitute the peripheral sector of the complex.

It is found in the cell inner membrane. It carries out the reaction a quinone + NADH + 5 H(+)(in) = a quinol + NAD(+) + 4 H(+)(out). In terms of biological role, NDH-1 shuttles electrons from NADH, via FMN and iron-sulfur (Fe-S) centers, to quinones in the respiratory chain. The immediate electron acceptor for the enzyme in this species is believed to be ubiquinone. Couples the redox reaction to proton translocation (for every two electrons transferred, four hydrogen ions are translocated across the cytoplasmic membrane), and thus conserves the redox energy in a proton gradient. The sequence is that of NADH-quinone oxidoreductase subunit D from Methylobacterium radiotolerans (strain ATCC 27329 / DSM 1819 / JCM 2831 / NBRC 15690 / NCIMB 10815 / 0-1).